Here is a 198-residue protein sequence, read N- to C-terminus: Recombination protein RecR (198 aa).

Residues 57–72 (CSVCGHITDQDPCYIC) form a C4-type zinc finger. The Toprim domain maps to 80–175 (SVICVVQDPK…KLSRIAHGLP (96 aa)).

Belongs to the RecR family.

Functionally, may play a role in DNA repair. It seems to be involved in an RecBC-independent recombinational process of DNA repair. It may act with RecF and RecO. In Bacillus pumilus (strain SAFR-032), this protein is Recombination protein RecR.